The primary structure comprises 302 residues: Dermonecrotic toxin LiSicTox-alphaIA2bii (302 aa).

Positions 1–14 are cleaved as a signal peptide; that stretch reads IALILVCWSVLSQA. Residues 15 to 22 constitute a propeptide that is removed on maturation; sequence AQTDVEGR. Residue His-34 is part of the active site. The Mg(2+) site is built by Glu-54 and Asp-56. The active-site Nucleophile is His-70. Intrachain disulfides connect Cys-74/Cys-80 and Cys-76/Cys-219. Position 114 (Asp-114) interacts with Mg(2+). A glycan (N-linked (GlcNAc...) asparagine) is linked at Asn-279.

The protein belongs to the arthropod phospholipase D family. Class II subfamily. It depends on Mg(2+) as a cofactor. In terms of tissue distribution, expressed by the venom gland.

Its subcellular location is the secreted. The catalysed reaction is an N-(acyl)-sphingosylphosphocholine = an N-(acyl)-sphingosyl-1,3-cyclic phosphate + choline. It catalyses the reaction an N-(acyl)-sphingosylphosphoethanolamine = an N-(acyl)-sphingosyl-1,3-cyclic phosphate + ethanolamine. It carries out the reaction a 1-acyl-sn-glycero-3-phosphocholine = a 1-acyl-sn-glycero-2,3-cyclic phosphate + choline. The enzyme catalyses a 1-acyl-sn-glycero-3-phosphoethanolamine = a 1-acyl-sn-glycero-2,3-cyclic phosphate + ethanolamine. Dermonecrotic toxins cleave the phosphodiester linkage between the phosphate and headgroup of certain phospholipids (sphingolipid and lysolipid substrates), forming an alcohol (often choline) and a cyclic phosphate. This toxin acts on sphingomyelin (SM). It may also act on ceramide phosphoethanolamine (CPE), lysophosphatidylcholine (LPC) and lysophosphatidylethanolamine (LPE), but not on lysophosphatidylserine (LPS), and lysophosphatidylglycerol (LPG). It acts by transphosphatidylation, releasing exclusively cyclic phosphate products as second products. Induces dermonecrosis, hemolysis, increased vascular permeability, edema, inflammatory response, and platelet aggregation. The sequence is that of Dermonecrotic toxin LiSicTox-alphaIA2bii from Loxosceles intermedia (Brown spider).